The sequence spans 503 residues: ATP synthase subunit alpha (503 aa).

169 to 176 (GDRKTGKT) contributes to the ATP binding site.

This sequence belongs to the ATPase alpha/beta chains family. As to quaternary structure, F-type ATPases have 2 components, CF(1) - the catalytic core - and CF(0) - the membrane proton channel. CF(1) has five subunits: alpha(3), beta(3), gamma(1), delta(1), epsilon(1). CF(0) has three main subunits: a(1), b(2) and c(9-12). The alpha and beta chains form an alternating ring which encloses part of the gamma chain. CF(1) is attached to CF(0) by a central stalk formed by the gamma and epsilon chains, while a peripheral stalk is formed by the delta and b chains.

It is found in the cell membrane. The enzyme catalyses ATP + H2O + 4 H(+)(in) = ADP + phosphate + 5 H(+)(out). Increases 2-fold following exposure to low pH. In terms of biological role, produces ATP from ADP in the presence of a proton gradient across the membrane. The alpha chain is a regulatory subunit. This chain is ATP synthase subunit alpha, found in Lactobacillus acidophilus (strain ATCC 700396 / NCK56 / N2 / NCFM).